The following is a 408-amino-acid chain: Phosphoglycerate kinase (408 aa).

Substrate-binding positions include 22–24, arginine 39, 60–63, arginine 117, and arginine 157; these read DIN and HQSR. ATP-binding positions include glutamate 332 and 358-361; that span reads GGHT.

It belongs to the phosphoglycerate kinase family. In terms of assembly, monomer.

The protein resides in the cytoplasm. It catalyses the reaction (2R)-3-phosphoglycerate + ATP = (2R)-3-phospho-glyceroyl phosphate + ADP. Its pathway is carbohydrate degradation; glycolysis; pyruvate from D-glyceraldehyde 3-phosphate: step 2/5. The sequence is that of Phosphoglycerate kinase from Thermoplasma volcanium (strain ATCC 51530 / DSM 4299 / JCM 9571 / NBRC 15438 / GSS1).